Reading from the N-terminus, the 407-residue chain is Inhibin beta B chain (407 aa).

Residues 1 to 28 form the signal peptide; sequence MDGLPGRALGAACLLLLAAGWLGPEAWG. The interval 27–60 is disordered; it reads WGSPTPPPSPAAPPPPPPPGALGGSQDTCTSCGG. Positions 29–292 are excised as a propeptide; the sequence is SPTPPPSPAA…VDSRHRIRKR (264 aa). Over residues 30–46 the composition is skewed to pro residues; the sequence is PTPPPSPAAPPPPPPPG. The N-linked (GlcNAc...) asparagine glycan is linked to Asn93. 4 disulfide bridges follow: Cys296-Cys304, Cys303-Cys372, Cys332-Cys404, and Cys336-Cys406.

This sequence belongs to the TGF-beta family. As to quaternary structure, dimeric, linked by one or more disulfide bonds. Inhibin B is a dimer of alpha and beta-B. Activin B is a homodimer of beta-B. Activin AB is a dimer of beta-A and beta-B. Interacts with FST and FSTL3.

It is found in the secreted. Functionally, inhibins and activins inhibit and activate, respectively, the secretion of follitropin by the pituitary gland. Inhibins/activins are involved in regulating a number of diverse functions such as hypothalamic and pituitary hormone secretion, gonadal hormone secretion, germ cell development and maturation, erythroid differentiation, insulin secretion, nerve cell survival, embryonic axial development or bone growth, depending on their subunit composition. Inhibins appear to oppose the functions of activins. In terms of biological role, activin B is a dimer of alpha and beta-B that plays a role in several essential biological processes including embryonic development, stem cell maintenance and differentiation, haematopoiesis, cell proliferation and wound healing. Signals through type I receptor ACVR1C, abundantly expressed in pancreatic beta cells, and type II receptors like ACVR2A. Upon ligand binding, these receptors phosphorylate intracellular signaling mediators SMAD2 and SMAD3, which form a complex with SMAD4, translocate to the nucleus, and regulate gene expression. Plays a crucial role in the induction of hepcidin by inflammation through activation of ACVR1C and subsequent phosphorylation of SMAD1/5/8. Regulates adipocyte lipid metabolism by decreasing non-esterified fatty acids and glycerol release and increases intracellular triglyceride content. Stimulates wound healing by promoting cell migration and hair follicle regeneration through the JNK and ERK signaling pathways downstream of RHOA. Inhibin B is a dimer of alpha and beta-B that plays a crucial role in the regulation of the reproductive system by inhibiting the secretion of follicle-stimulating hormone (FSH) from the anterior pituitary gland. Thereby, maintains reproductive homeostasis in both males and females. Acts as a more potent suppressor of FSH release than inhibin A. Functions as competitive receptor antagonist binding activin type II receptors with high affinity in the presence of the TGF-beta type III coreceptor/TGFBR3L. In Sus scrofa (Pig), this protein is Inhibin beta B chain (INHBB).